Reading from the N-terminus, the 2214-residue chain is Multifunctional protein URA2 (2214 aa).

At Ala-2 the chain carries N-acetylalanine. The tract at residues 2 to 400 (ATIAPTAPIT…PGPRDTEFLF (399 aa)) is GATase (Glutamine amidotransferase). L-glutamine-binding residues include Ser-64, Gly-273, and Gly-275. The 186-residue stretch at 228 to 413 (RILAIDVGMK…IQAVKEFKYT (186 aa)) folds into the Glutamine amidotransferase type-1 domain. Cys-302 functions as the Nucleophile; for GATase activity in the catalytic mechanism. The L-glutamine site is built by Leu-303, Gln-306, Asn-344, Gly-346, and Phe-347. Residues His-386 and Glu-388 each act as for GATase activity in the active site. Residues 401–440 (DVFIQAVKEFKYTQVLKPIAFPGGLLEDNVKAHPRIEAKK) are linker. The CPSase A stretch occupies residues 440-980 (KVLVLGSGGL…DSHDLSFDDH (541 aa)). Residues 440-1482 (KVLVLGSGGL…TNVKCAKLLI (1043 aa)) are CPSase (Carbamoyl phosphate synthase). The ATP site is built by Arg-558, Arg-598, Gly-604, Gly-605, Lys-635, Met-637, Glu-642, Gly-668, Ile-669, His-670, Gln-711, and Glu-725. ATP-grasp domains are found at residues 562-754 (SNAI…KLGL) and 1099-1290 (SRML…KAIM). Mg(2+) contacts are provided by Gln-711, Glu-725, and Asn-727. Gln-711, Glu-725, and Asn-727 together coordinate Mn(2+). The CPSase B stretch occupies residues 981–1482 (GVMVLGSGVY…TNVKCAKLLI (502 aa)). ATP contacts are provided by Arg-1135, Lys-1174, Ile-1176, Glu-1181, Gly-1206, Val-1207, His-1208, Ser-1209, Gln-1249, and Glu-1261. 3 residues coordinate Mg(2+): Gln-1249, Glu-1261, and Asn-1263. Mn(2+) is bound by residues Gln-1249, Glu-1261, and Asn-1263. The MGS-like domain maps to 1356-1508 (FKLPKKNILL…QTSHRTITLP (153 aa)). The interval 1483–1492 (EAISRNITLD) is linker. Residues 1493 to 1821 (VSERDAQTSH…YNGETLVLSG (329 aa)) are defective DHOase domain. Residues 1822–1909 (ELVSPGAKGK…NLIRSNNPFR (88 aa)) are linker. A Glycyl lysine isopeptide (Lys-Gly) (interchain with G-Cter in ubiquitin) cross-link involves residue Lys-1853. Ser-1857 is subject to Phosphoserine; by PKA. Residues 1910 to 2214 (GRHILSIKQF…LLAMVMGVDM (305 aa)) are ATCase (Aspartate transcarbamylase). 2 residues coordinate carbamoyl phosphate: Arg-1962 and Thr-1963. Lys-1990 provides a ligand contact to L-aspartate. Carbamoyl phosphate is bound by residues Arg-2011, His-2039, and Gln-2042. Arg-2072 and Arg-2134 together coordinate L-aspartate. Residues Leu-2173 and Pro-2174 each contribute to the carbamoyl phosphate site.

The protein in the N-terminal section; belongs to the CarA family. It in the 2nd section; belongs to the CarB family. In the 3rd section; belongs to the metallo-dependent hydrolases superfamily. DHOase family. CAD subfamily. This sequence in the C-terminal section; belongs to the aspartate/ornithine carbamoyltransferase superfamily. ATCase family. The cofactor is Mg(2+). Requires Mn(2+) as cofactor.

The protein localises to the cytoplasm. The catalysed reaction is hydrogencarbonate + L-glutamine + 2 ATP + H2O = carbamoyl phosphate + L-glutamate + 2 ADP + phosphate + 2 H(+). The enzyme catalyses L-glutamine + H2O = L-glutamate + NH4(+). It catalyses the reaction hydrogencarbonate + NH4(+) + 2 ATP = carbamoyl phosphate + 2 ADP + phosphate + 2 H(+). It carries out the reaction carbamoyl phosphate + L-aspartate = N-carbamoyl-L-aspartate + phosphate + H(+). Its pathway is pyrimidine metabolism; UMP biosynthesis via de novo pathway; (S)-dihydroorotate from bicarbonate: step 1/3. It functions in the pathway pyrimidine metabolism; UMP biosynthesis via de novo pathway; (S)-dihydroorotate from bicarbonate: step 2/3. With respect to regulation, both CPSase and ATCase activities are feedback inhibited by the end product UTP. Functionally, multifunctional protein that encodes the first 2 enzymatic activities of the de novo pyrimidine pathway: carbamoylphosphate synthetase (CPSase; EC 6.3.5.5) and aspartate transcarbamylase (ATCase; EC 2.1.3.2). The CPSase-function is accomplished in 2 steps, by a glutamine-dependent amidotransferase activity (GATase) that binds and cleaves glutamine to produce ammonia, followed by an ammonium-dependent carbamoyl phosphate synthetase, which reacts with the ammonia, hydrogencarbonate and ATP to form carbamoyl phosphate. The endogenously produced carbamoyl phosphate is sequestered and channeled to the ATCase active site. ATCase then catalyzes the formation of carbamoyl-L-aspartate from L-aspartate and carbamoyl phosphate. This is Multifunctional protein URA2 (URA2) from Saccharomyces cerevisiae (strain ATCC 204508 / S288c) (Baker's yeast).